Reading from the N-terminus, the 395-residue chain is uncharacterized protein (395 aa).

The first 18 residues, 1 to 18 (MKHVIMLYFIAAATLFSS), serve as a signal peptide directing secretion. Cysteine 19 carries N-palmitoyl cysteine lipidation. Residue cysteine 19 is the site of S-diacylglycerol cysteine attachment.

The protein resides in the cell outer membrane. In terms of biological role, may be involved in ulvan degradation. Ulvan is the main polysaccharide component of the Ulvales (green seaweed) cell wall. It is composed of disaccharide building blocks comprising 3-sulfated rhamnose (Rha3S) linked to D-glucuronic acid (GlcA), L-iduronic acid (IduA), or D-xylose (Xyl). This is an uncharacterized protein from Formosa agariphila (strain DSM 15362 / KCTC 12365 / LMG 23005 / KMM 3901 / M-2Alg 35-1).